A 141-amino-acid polypeptide reads, in one-letter code: Nucleoside diphosphate kinase (141 aa).

Residues K11, F59, R87, T93, R104, and N114 each contribute to the ATP site. H117 serves as the catalytic Pros-phosphohistidine intermediate.

The protein belongs to the NDK family. Homotetramer. Mg(2+) is required as a cofactor.

The protein localises to the cytoplasm. The catalysed reaction is a 2'-deoxyribonucleoside 5'-diphosphate + ATP = a 2'-deoxyribonucleoside 5'-triphosphate + ADP. The enzyme catalyses a ribonucleoside 5'-diphosphate + ATP = a ribonucleoside 5'-triphosphate + ADP. Its function is as follows. Major role in the synthesis of nucleoside triphosphates other than ATP. The ATP gamma phosphate is transferred to the NDP beta phosphate via a ping-pong mechanism, using a phosphorylated active-site intermediate. The protein is Nucleoside diphosphate kinase of Bdellovibrio bacteriovorus (strain ATCC 15356 / DSM 50701 / NCIMB 9529 / HD100).